Consider the following 347-residue polypeptide: Farnesyl pyrophosphate synthase (347 aa).

Isopentenyl diphosphate-binding residues include lysine 50, arginine 53, and glutamine 88. Residues aspartate 95 and aspartate 99 each contribute to the Mg(2+) site. Residue arginine 104 participates in dimethylallyl diphosphate binding. Residue arginine 105 participates in isopentenyl diphosphate binding. 5 residues coordinate dimethylallyl diphosphate: lysine 192, threonine 193, glutamine 232, lysine 249, and lysine 258.

This sequence belongs to the FPP/GGPP synthase family. In terms of assembly, interacts with spo9. Mg(2+) serves as cofactor.

The protein resides in the cytoplasm. It is found in the nucleus. The enzyme catalyses isopentenyl diphosphate + dimethylallyl diphosphate = (2E)-geranyl diphosphate + diphosphate. The catalysed reaction is isopentenyl diphosphate + (2E)-geranyl diphosphate = (2E,6E)-farnesyl diphosphate + diphosphate. Its pathway is isoprenoid biosynthesis; farnesyl diphosphate biosynthesis; farnesyl diphosphate from geranyl diphosphate and isopentenyl diphosphate: step 1/1. It participates in isoprenoid biosynthesis; geranyl diphosphate biosynthesis; geranyl diphosphate from dimethylallyl diphosphate and isopentenyl diphosphate: step 1/1. In terms of biological role, farnesyl pyrophosphate synthase; part of the second module of ergosterol biosynthesis pathway that includes the middle steps of the pathway. Fps1 catalyzes the sequential condensation of isopentenyl pyrophosphate with dimethylallyl pyrophosphate, and then with the resultant geranylpyrophosphate to the ultimate product farnesyl pyrophosphate. The second module is carried out in the vacuole and involves the formation of farnesyl diphosphate, which is also an important intermediate in the biosynthesis of ubiquinone, dolichol, heme and prenylated proteins. Activity by the mevalonate kinase erg12 first converts mevalonate into 5-phosphomevalonate. 5-phosphomevalonate is then further converted to 5-diphosphomevalonate by the phosphomevalonate kinase erg8. The diphosphomevalonate decarboxylase mvd1 then produces isopentenyl diphosphate. The isopentenyl-diphosphate delta-isomerase idi1 then catalyzes the 1,3-allylic rearrangement of the homoallylic substrate isopentenyl (IPP) to its highly electrophilic allylic isomer, dimethylallyl diphosphate (DMAPP). Finally the farnesyl diphosphate synthase fps1 catalyzes the sequential condensation of isopentenyl pyrophosphate with dimethylallyl pyrophosphate, and then with the resultant geranylpyrophosphate to the ultimate product farnesyl pyrophosphate. This chain is Farnesyl pyrophosphate synthase, found in Schizosaccharomyces pombe (strain 972 / ATCC 24843) (Fission yeast).